Here is a 220-residue protein sequence, read N- to C-terminus: Homeobox-leucine zipper protein ATHB-21 (220 aa).

The segment at 26-48 (VPQQGGEAKPTRRRKRKSKSVVV) is disordered. Positions 58 to 117 (GWFRKRKLSDEQVRMLEISFEDDHKLESERKDRLASELGLDPRQVAVWFQNRRARWKNKR) form a DNA-binding region, homeobox. The tract at residues 118-146 (VEDEYTKLKNAYETTVVEKCRLDSEVIHL) is leucine-zipper.

Belongs to the HD-ZIP homeobox family. Class I subfamily. In terms of tissue distribution, widely expressed.

It localises to the nucleus. Functionally, probable transcription factor. The sequence is that of Homeobox-leucine zipper protein ATHB-21 (ATHB-21) from Arabidopsis thaliana (Mouse-ear cress).